The following is a 316-amino-acid chain: Apolipoprotein E (316 aa).

The N-terminal stretch at 1-18 (MKVLWAALVVTLLAGCGA) is a signal peptide. 8 tandem repeats follow at residues 83–104 (ALMDDTMKEVKACKSELEEQLG), 105–126 (PVTEETKARVSKELQAAQARLG), 127–148 (ADMEEVRSRLAQYRGELQAMVG), 149–170 (QSTEELRGRLSAHLRKLRKRLL), 171–192 (RDAEDLQRRLAVYQAGIREGAA), 193–214 (RSVNTLREHLGPLAEQAATVHT), 215–232 (LVSKPLQERAEAWAQRLR), and 233–254 (GRLEKAGFPVGDRLDEVREQVQ). Residues 83–254 (ALMDDTMKEV…RLDEVREQVQ (172 aa)) are 8 X 22 AA approximate tandem repeats. Positions 161–171 (HLRKLRKRLLR) are LDL and other lipoprotein receptors binding. Heparin is bound at residue 165 to 168 (LRKR). Positions 213 to 289 (HTLVSKPLQE…SWFEPLVQDM (77 aa)) are lipid-binding and lipoprotein association. 228–235 (AQRLRGRL) is a heparin binding site. The homooligomerization stretch occupies residues 265–316 (NQVRLQAEAFQGRLKSWFEPLVQDMQQKWAELVEKVQLAVGAVPTSVPSEKQ). A specificity for association with VLDL region spans residues 277 to 289 (RLKSWFEPLVQDM).

It belongs to the apolipoprotein A1/A4/E family. As to quaternary structure, homotetramer. May interact with ABCA1; functionally associated with ABCA1 in the biogenesis of HDLs. May interact with APP/A4 amyloid-beta peptide; the interaction is extremely stable in vitro but its physiological significance is unclear. May interact with MAPT. May interact with MAP2. In the cerebrospinal fluid, interacts with secreted SORL1. Interacts with PMEL; this allows the loading of PMEL luminal fragment on ILVs to induce fibril nucleation. Post-translationally, APOE exists as multiple glycosylated and sialylated glycoforms within cells and in plasma. The extent of glycosylation and sialylation are tissue and context specific. In terms of processing, glycated in plasma VLDL. Phosphorylated by FAM20C in the extracellular medium.

The protein resides in the secreted. It is found in the extracellular space. Its subcellular location is the extracellular matrix. It localises to the extracellular vesicle. The protein localises to the endosome. The protein resides in the multivesicular body. Functionally, APOE is an apolipoprotein, a protein associating with lipid particles, that mainly functions in lipoprotein-mediated lipid transport between organs via the plasma and interstitial fluids. APOE is a core component of plasma lipoproteins and is involved in their production, conversion and clearance. Apolipoproteins are amphipathic molecules that interact both with lipids of the lipoprotein particle core and the aqueous environment of the plasma. As such, APOE associates with chylomicrons, chylomicron remnants, very low density lipoproteins (VLDL) and intermediate density lipoproteins (IDL) but shows a preferential binding to high-density lipoproteins (HDL). It also binds a wide range of cellular receptors including the LDL receptor/LDLR and the very low-density lipoprotein receptor/VLDLR that mediate the cellular uptake of the APOE-containing lipoprotein particles. Finally, APOE also has a heparin-binding activity and binds heparan-sulfate proteoglycans on the surface of cells, a property that supports the capture and the receptor-mediated uptake of APOE-containing lipoproteins by cells. The polypeptide is Apolipoprotein E (APOE) (Diceros bicornis (Black rhinoceros)).